Reading from the N-terminus, the 312-residue chain is Acyl-CoA C20 Delta5-desaturase (312 aa).

A run of 2 helical transmembrane segments spans residues 45 to 65 (VFHI…PSTF) and 69 to 89 (SFWV…TLSF). Residues His90, His95, His127, His130, and His131 each coordinate Fe cation. Positions 90–95 (HRNLTH) match the Histidine box-1 motif. Positions 127–131 (HRYHH) match the Histidine box-2 motif. Residues 193-213 (LQAALLYLFGGFPFIVWGMAV) traverse the membrane as a helical segment. Fe cation is bound by residues His230, His259, His262, and His263. The Histidine box-3 motif lies at 259 to 263 (HNNHH).

It belongs to the fatty acid desaturase type 1 family. Requires Fe(2+) as cofactor.

It localises to the membrane. It carries out the reaction (11Z,14Z)-eicosadienoyl-CoA + AH2 + O2 = (5Z,11Z,14Z)-eicosatrienoyl-CoA + A + 2 H2O. The catalysed reaction is (11Z,14Z,17Z)-eicosatrienoyl-CoA + AH2 + O2 = (5Z,11Z,14Z,17Z)-eicosatetraenoyl-CoA + A + 2 H2O. It functions in the pathway lipid metabolism; polyunsaturated fatty acid biosynthesis. Catalyzes the desaturation of 20:2Delta(11,14) and 20:3Delta(11,14,17) to generate sciadonic acid (20:3Delta(5,11,14)) and juniperonic acid (20:4Delta(5,11,14,17)). In Anemone leveillei (Windflower), this protein is Acyl-CoA C20 Delta5-desaturase.